A 465-amino-acid polypeptide reads, in one-letter code: Cysteine--tRNA ligase (465 aa).

Cys-29 is a Zn(2+) binding site. A 'HIGH' region motif is present at residues 31–41 (ITPYDEVHLGH). Residues Cys-212, His-237, and Glu-241 each contribute to the Zn(2+) site. The 'KMSKS' region motif lies at 269–273 (KMSKS). Lys-272 contributes to the ATP binding site.

Belongs to the class-I aminoacyl-tRNA synthetase family. As to quaternary structure, monomer. Zn(2+) is required as a cofactor.

The protein resides in the cytoplasm. It catalyses the reaction tRNA(Cys) + L-cysteine + ATP = L-cysteinyl-tRNA(Cys) + AMP + diphosphate. This is Cysteine--tRNA ligase from Endomicrobium trichonymphae.